The chain runs to 662 residues: Glutathione hydrolase 7 (662 aa).

Topologically, residues 1 to 106 (MAAENEASQE…AAECSCRQDG (106 aa)) are cytoplasmic. Ser17, Ser72, Ser79, and Ser83 each carry phosphoserine. The segment at 26 to 90 (SFPRLPEDEP…DGSPLRETRK (65 aa)) is disordered. Low complexity predominate over residues 72 to 83 (SSSSEMGSQDGS). Residues 107-127 (LTVIVTACLTFATGVTVALVM) traverse the membrane as a helical; Signal-anchor for type II membrane protein segment. Residues 128 to 662 (QIYFGDPQIF…SLDATGASIL (535 aa)) are Extracellular-facing. Residues Asn198, Asn267, Asn283, Asn330, Asn353, Asn394, Asn519, Asn523, and Asn586 are each glycosylated (N-linked (GlcNAc...) asparagine).

It belongs to the gamma-glutamyltransferase family. In terms of assembly, heterodimer composed of the light and heavy chains. The active site is located in the light chain. Post-translationally, cleaved by autocatalysis into a large and a small subunit and the autocatalytic cleavage is essential to the functional activation of the enzyme.

It is found in the membrane. It catalyses the reaction an N-terminal (5-L-glutamyl)-[peptide] + an alpha-amino acid = 5-L-glutamyl amino acid + an N-terminal L-alpha-aminoacyl-[peptide]. It carries out the reaction glutathione + H2O = L-cysteinylglycine + L-glutamate. The catalysed reaction is an S-substituted glutathione + H2O = an S-substituted L-cysteinylglycine + L-glutamate. It participates in sulfur metabolism; glutathione metabolism. In terms of biological role, hydrolyzes and transfers gamma-glutamyl moieties from glutathione and other gamma-glutamyl compounds to acceptors. This is Glutathione hydrolase 7 from Rattus norvegicus (Rat).